Reading from the N-terminus, the 1696-residue chain is uncharacterized protein (1696 aa).

Disordered regions lie at residues Met-1–Tyr-113, Asp-151–Arg-194, Asp-258–Lys-284, and Gly-299–Gly-376. Residues Leu-21 to Gln-42 show a composition bias toward pro residues. The segment covering Gly-52 to Arg-61 has biased composition (polar residues). A compositionally biased stretch (low complexity) spans Gln-96–Tyr-113. Residues Arg-170–Val-183 show a composition bias toward polar residues. Composition is skewed to basic and acidic residues over residues Glu-267–Lys-284, Glu-325–Arg-340, and Arg-358–Gly-376. Position 378 is a phosphoserine (Ser-378). Disordered regions lie at residues Arg-419 to Leu-483, Ser-688 to Pro-724, Ile-1063 to Ser-1090, Thr-1184 to Ser-1211, Gly-1319 to Arg-1340, Val-1361 to Ser-1429, and Ser-1658 to Met-1696. 2 stretches are compositionally biased toward basic and acidic residues: residues Leu-421–Gly-436 and Asp-695–Val-704. Ser-708 carries the post-translational modification Phosphoserine. A compositionally biased stretch (basic and acidic residues) spans Thr-1184–Glu-1204. The span at Val-1361–Gln-1370 shows a compositional bias: basic and acidic residues. 3 stretches are compositionally biased toward polar residues: residues Asn-1389–Ser-1398, Ser-1658–Ser-1667, and Ser-1677–Met-1696.

This is an uncharacterized protein from Arabidopsis thaliana (Mouse-ear cress).